A 199-amino-acid chain; its full sequence is UPF0329 protein ECU01_0120/ECU01_1490/ECU08_0050 (199 aa).

The protein belongs to the UPF0329 family.

The polypeptide is UPF0329 protein ECU01_0120/ECU01_1490/ECU08_0050 (Encephalitozoon cuniculi (strain GB-M1) (Microsporidian parasite)).